A 32-amino-acid chain; its full sequence is Cyclotide Hyfl-C (32 aa).

Residues 1 to 32 (GSPRQCAETCFIGKCYTEELGCTCTAFLCMKN) constitute a cross-link (cyclopeptide (Gly-Asn)). Intrachain disulfides connect C6-C22, C10-C24, and C15-C29.

It belongs to the cyclotide family. Moebius subfamily. This is a cyclic peptide.

In terms of biological role, probably participates in a plant defense mechanism. In Hybanthus floribundus (Greenviolet), this protein is Cyclotide Hyfl-C.